Consider the following 218-residue polypeptide: LexA repressor (218 aa).

The segment at residues Arg28–Arg48 is a DNA-binding region (H-T-H motif). Catalysis depends on for autocatalytic cleavage activity residues Ser136 and Lys173.

Belongs to the peptidase S24 family. As to quaternary structure, homodimer.

It catalyses the reaction Hydrolysis of Ala-|-Gly bond in repressor LexA.. In terms of biological role, represses a number of genes involved in the response to DNA damage (SOS response), including recA and lexA. In the presence of single-stranded DNA, RecA interacts with LexA causing an autocatalytic cleavage which disrupts the DNA-binding part of LexA, leading to derepression of the SOS regulon and eventually DNA repair. The chain is LexA repressor from Cupriavidus metallidurans (strain ATCC 43123 / DSM 2839 / NBRC 102507 / CH34) (Ralstonia metallidurans).